We begin with the raw amino-acid sequence, 342 residues long: Tetraacyldisaccharide 4'-kinase (342 aa).

68-75 provides a ligand contact to ATP; the sequence is TVGGTGKT.

The protein belongs to the LpxK family.

It carries out the reaction a lipid A disaccharide + ATP = a lipid IVA + ADP + H(+). It participates in glycolipid biosynthesis; lipid IV(A) biosynthesis; lipid IV(A) from (3R)-3-hydroxytetradecanoyl-[acyl-carrier-protein] and UDP-N-acetyl-alpha-D-glucosamine: step 6/6. Transfers the gamma-phosphate of ATP to the 4'-position of a tetraacyldisaccharide 1-phosphate intermediate (termed DS-1-P) to form tetraacyldisaccharide 1,4'-bis-phosphate (lipid IVA). This Burkholderia ambifaria (strain MC40-6) protein is Tetraacyldisaccharide 4'-kinase.